A 170-amino-acid polypeptide reads, in one-letter code: Shikimate kinase (170 aa).

ATP is bound at residue 11-16; that stretch reads GAGKTT. A Mg(2+)-binding site is contributed by T15. Substrate contacts are provided by D33, R57, and G80. R119 contributes to the ATP binding site. R141 contacts substrate.

This sequence belongs to the shikimate kinase family. Monomer. Mg(2+) serves as cofactor.

It localises to the cytoplasm. It catalyses the reaction shikimate + ATP = 3-phosphoshikimate + ADP + H(+). It participates in metabolic intermediate biosynthesis; chorismate biosynthesis; chorismate from D-erythrose 4-phosphate and phosphoenolpyruvate: step 5/7. Its function is as follows. Catalyzes the specific phosphorylation of the 3-hydroxyl group of shikimic acid using ATP as a cosubstrate. The polypeptide is Shikimate kinase (Azobacteroides pseudotrichonymphae genomovar. CFP2).